The sequence spans 487 residues: Probable Xaa-Pro aminopeptidase CPSG_02684 (487 aa).

Positions 1–10 are enriched in polar residues; sequence MAGSNTLSSS. Positions 1-22 are disordered; the sequence is MAGSNTLSSSEHGDDPRGHSYS. Residues aspartate 275, aspartate 286, glutamate 421, and glutamate 460 each coordinate Mn(2+).

This sequence belongs to the peptidase M24B family. Requires Mn(2+) as cofactor.

The catalysed reaction is Release of any N-terminal amino acid, including proline, that is linked to proline, even from a dipeptide or tripeptide.. Its function is as follows. Catalyzes the removal of a penultimate prolyl residue from the N-termini of peptides. The polypeptide is Probable Xaa-Pro aminopeptidase CPSG_02684 (Coccidioides posadasii (strain RMSCC 757 / Silveira) (Valley fever fungus)).